Here is a 491-residue protein sequence, read N- to C-terminus: Cobyric acid synthase (491 aa).

One can recognise a GATase cobBQ-type domain in the interval 250–439 (EVTIAVIRLP…LHGIFDNGAW (190 aa)). Catalysis depends on C331, which acts as the Nucleophile. H431 is an active-site residue.

It belongs to the CobB/CobQ family. CobQ subfamily.

The protein operates within cofactor biosynthesis; adenosylcobalamin biosynthesis. Catalyzes amidations at positions B, D, E, and G on adenosylcobyrinic A,C-diamide. NH(2) groups are provided by glutamine, and one molecule of ATP is hydrogenolyzed for each amidation. The polypeptide is Cobyric acid synthase (Synechococcus sp. (strain ATCC 27144 / PCC 6301 / SAUG 1402/1) (Anacystis nidulans)).